We begin with the raw amino-acid sequence, 435 residues long: Protein phosphatase 2C homolog 2 (435 aa).

A PPM-type phosphatase domain is found at 23 to 298; that stretch reads IYGVSAMQGW…DNMTMIIIGL (276 aa). 4 residues coordinate Mn(2+): aspartate 71, glycine 72, aspartate 240, and aspartate 289. Residues 366–435 are disordered; that stretch reads DQTEEDRDLP…TSGAPEKSTS (70 aa). Positions 381–392 are enriched in basic and acidic residues; the sequence is ELPDSARNEREG. Residues 409-418 are compositionally biased toward low complexity; it reads GSSASTSEST. Polar residues predominate over residues 419 to 435; it reads VTPAGSSTSGAPEKSTS.

This sequence belongs to the PP2C family. It depends on Mg(2+) as a cofactor. Mn(2+) is required as a cofactor.

The protein localises to the cytoplasm. It localises to the nucleus. It catalyses the reaction O-phospho-L-seryl-[protein] + H2O = L-seryl-[protein] + phosphate. The catalysed reaction is O-phospho-L-threonyl-[protein] + H2O = L-threonyl-[protein] + phosphate. In terms of biological role, dephosphorylating regulator for many key proteins. Dephosphorylates phosphoglycerate kinase pgk1 at least on 'Ser-203' to negatively regulate targeting of pgk1 to the mitochondrion, thereby negatively regulating production of acetyl-CoA and consequently aflatoxin biosynthesis. This chain is Protein phosphatase 2C homolog 2, found in Aspergillus flavus (strain ATCC 200026 / FGSC A1120 / IAM 13836 / NRRL 3357 / JCM 12722 / SRRC 167).